A 62-amino-acid polypeptide reads, in one-letter code: Sperm protamine P1 (62 aa).

The interval 1-62 (MARYRRHSRS…RRYSRRRRRY (62 aa)) is disordered.

It belongs to the protamine P1 family. As to expression, testis.

It localises to the nucleus. The protein localises to the chromosome. Its function is as follows. Protamines substitute for histones in the chromatin of sperm during the haploid phase of spermatogenesis. They compact sperm DNA into a highly condensed, stable and inactive complex. The polypeptide is Sperm protamine P1 (PRM1) (Sminthopsis longicaudata (Long-tailed dunnart)).